A 117-amino-acid polypeptide reads, in one-letter code: Cliotide T9 (117 aa).

The N-terminal stretch at 1–25 is a signal peptide; the sequence is MAYVRLACLAVIFFFAASVMFTVEA. The cyclopeptide (Gly-Asn) cross-link spans 26-55; sequence GIPCGESCVFIPCLTTVVGCSCKNKVCYNN. Disulfide bonds link Cys29–Cys45, Cys33–Cys47, and Cys38–Cys52. The propeptide at 56 to 117 is removed in mature form; sequence HVIAAEANSI…YLLKDFLKMP (62 aa).

Contains 3 disulfide bonds. Post-translationally, this is a cyclic peptide. In terms of tissue distribution, expressed in seed but not in root, nodule, flower, stem, shoot, leaf and pod (at protein level).

In terms of biological role, probably participates in a plant defense mechanism. This Clitoria ternatea (Butterfly pea) protein is Cliotide T9.